A 273-amino-acid chain; its full sequence is Gamma-glutamyl cyclotransferase gliK (273 aa).

Residues 227–243 (WLGWIILTLYGLMWSYH) traverse the membrane as a helical segment.

Belongs to the class-I pyridoxal-phosphate-dependent aminotransferase family.

It is found in the membrane. The enzyme catalyses an alpha-(gamma-L-glutamyl)-L-amino acid = 5-oxo-L-proline + an L-alpha-amino acid. The protein operates within mycotoxin biosynthesis. In terms of biological role, gamma-glutamyl cyclotransferase-like protein; part of the gene cluster that mediates the biosynthesis of gliotoxin, a member of the epipolythiodioxopiperazine (ETP) class of toxins characterized by a disulfide bridged cyclic dipeptide. The first step in gliotoxin biosynthesis is the condensation of serine and phenylalanine to form the cyclo-L-phenylalanyl-L-serine diketopiperazine (DKP) by the NRPS gliP. GliP is also able to produce the DKP cyclo-L-tryptophanyl-L-serine, suggesting that the substrate specificity of the first adenylation (A) domain in gliP is sufficiently relaxed to accommodate both L-Phe and L-Trp. The cytochrome P450 monooxygenase gliC has been shown to catalyze the subsequent hydroxylation of the alpha-carbon of L-Phe in cyclo-L-phenylalanyl-L-serine whereas the second cytochrome P450 enzyme, gliF, is presumably involved in the modification of the DKP side chain. The glutathione S-transferase (GST) gliG then forms a bis-glutathionylated biosynthetic intermediate which is responsible for the sulfurization of gliotoxin. This bis-glutathionylated intermediate is subsequently processed by the gamma-glutamyl cyclotransferase gliK to remove both gamma-glutamyl moieties. Subsequent processing via gliI yields a biosynthetic intermediate, which is N-methylated via the N-methyltransferase gliN, before the gliotoxin oxidoreductase gliT-mediated disulfide bridge closure. GliN-mediated amide methylation confers stability to ETP, damping the spontaneous formation of tri- and tetrasulfides. Intracellular dithiol gliotoxin oxidized by gliT is subsequently effluxed by gliA. Gliotoxin contributes to pathogenesis during invasive aspergillosis. In macrophages and neutrophils, gliotoxin showed inhibition of various different cell functions including cytokine production, antigen presentation, phagocytosis, and production of reactive oxygen species. This chain is Gamma-glutamyl cyclotransferase gliK, found in Aspergillus fumigatus (strain ATCC MYA-4609 / CBS 101355 / FGSC A1100 / Af293) (Neosartorya fumigata).